We begin with the raw amino-acid sequence, 388 residues long: Succinate--CoA ligase [ADP-forming] subunit beta (388 aa).

The ATP-grasp domain occupies 9–244 (KQLFADYGLP…PSQEDPREAH (236 aa)). Residues Lys46, 53–55 (GRG), Glu99, Thr102, and Glu107 each bind ATP. Residues Asn199 and Asp213 each contribute to the Mg(2+) site. Substrate-binding positions include Asn264 and 321-323 (GIV).

Belongs to the succinate/malate CoA ligase beta subunit family. As to quaternary structure, heterotetramer of two alpha and two beta subunits. It depends on Mg(2+) as a cofactor.

It carries out the reaction succinate + ATP + CoA = succinyl-CoA + ADP + phosphate. The catalysed reaction is GTP + succinate + CoA = succinyl-CoA + GDP + phosphate. Its pathway is carbohydrate metabolism; tricarboxylic acid cycle; succinate from succinyl-CoA (ligase route): step 1/1. Functionally, succinyl-CoA synthetase functions in the citric acid cycle (TCA), coupling the hydrolysis of succinyl-CoA to the synthesis of either ATP or GTP and thus represents the only step of substrate-level phosphorylation in the TCA. The beta subunit provides nucleotide specificity of the enzyme and binds the substrate succinate, while the binding sites for coenzyme A and phosphate are found in the alpha subunit. The polypeptide is Succinate--CoA ligase [ADP-forming] subunit beta (Hahella chejuensis (strain KCTC 2396)).